Consider the following 363-residue polypeptide: Ribonuclease D (363 aa).

Positions 5–168 (ITHPSELTDR…AIHDELTRRL (164 aa)) constitute a 3'-5' exonuclease domain. Residues 208–288 (EPAAQRRLLR…NTPLPDEEHA (81 aa)) enclose the HRDC domain.

Belongs to the RNase D family. The cofactor is a divalent metal cation.

The protein resides in the cytoplasm. The catalysed reaction is Exonucleolytic cleavage that removes extra residues from the 3'-terminus of tRNA to produce 5'-mononucleotides.. Exonuclease involved in the 3' processing of various precursor tRNAs. Initiates hydrolysis at the 3'-terminus of an RNA molecule and releases 5'-mononucleotides. In Xanthomonas oryzae pv. oryzae (strain KACC10331 / KXO85), this protein is Ribonuclease D.